Here is a 301-residue protein sequence, read N- to C-terminus: NAD kinase 2 (301 aa).

Asp77 acts as the Proton acceptor in catalysis. NAD(+)-binding positions include 77 to 78, Arg82, 151 to 152, Lys162, Asp181, and 192 to 197; these read DG, NE, and TAYAFS.

The protein belongs to the NAD kinase family. It depends on a divalent metal cation as a cofactor.

The protein localises to the cytoplasm. It catalyses the reaction NAD(+) + ATP = ADP + NADP(+) + H(+). Functionally, involved in the regulation of the intracellular balance of NAD and NADP, and is a key enzyme in the biosynthesis of NADP. Catalyzes specifically the phosphorylation on 2'-hydroxyl of the adenosine moiety of NAD to yield NADP. This chain is NAD kinase 2, found in Streptomyces coelicolor (strain ATCC BAA-471 / A3(2) / M145).